Consider the following 658-residue polypeptide: Transcription factor cep-1 (658 aa).

Residues 238-428 (EEWLTFEVKK…RDWKNFCEKR (191 aa)) mediate DNA binding. C319, H322, C375, and C379 together coordinate Zn(2+). Residues 450–477 (QSSLHSGPSSPEKVTDTSQMFQSTSSSS) form a disordered region. Residues 466–476 (TSQMFQSTSSS) show a composition bias toward low complexity. Residues 535 to 564 (QYGLQRQVKLSEKEYSKFVAFFAKEGENEI) are required for tertiary structure stability of the protein.

The protein belongs to the p53 family. As to quaternary structure, homodimer. Interacts (via C-terminus domain) with prmt-5; not methylated by prmt-5. Interacts with cbp-1 (via HAT domain); cep-1 transcriptional activity may be inhibited by interaction with methylated cbp-1. Component of a complex that contains prmt-5 and cbp-1. Interacts with ape-1; the interaction inhibits pro-apoptotic activity of cep-1. Zn(2+) serves as cofactor. Phosphorylated in response to IR-induced DNA damage which is thought to be mediated by akt-1.

The protein localises to the nucleus. Functionally, transcriptional activator that binds the same DNA consensus sequence as p53. Has a role in normal development to ensure proper meiotic chromosome segregation. Promotes apoptosis under conditions of cellular and genotoxic stress in response to DNA damage, hypoxia, or starvation. However, not required for DNA repair in response to UV-C or to regulate cell-cycle progression. Regulates germline apoptosis in response to DNA damage. Required for induction of ced-13 in response to DNA damage. Its pro-apoptotic activity is inhibited when bound to ape-1 in vitro. Regulates germline proliferation by activating phg-1. Regulates DNA damage-induced apoptosis by inducing transcription of the programmed cell death activator egl-1. Negatively regulates lifespan. The protein is Transcription factor cep-1 of Caenorhabditis briggsae.